A 266-amino-acid polypeptide reads, in one-letter code: UPF0294 protein YafD (266 aa).

This sequence belongs to the UPF0294 family.

Its subcellular location is the cytoplasm. This is UPF0294 protein YafD from Shigella dysenteriae serotype 1 (strain Sd197).